Reading from the N-terminus, the 480-residue chain is Salicylate hydroxylase asL1 (480 aa).

The helical transmembrane segment at 17–37 (PMEIAIVGGGIVGVILAIGLT) threads the bilayer. Residues Glu47 and Ala60 each coordinate FAD. Asn87 is a glycosylation site (N-linked (GlcNAc...) asparagine). Residue Arg131 participates in FAD binding. A glycan (N-linked (GlcNAc...) asparagine) is linked at Asn168. Residues Arg213 and Tyr246 contribute to the active site. Asn250 carries N-linked (GlcNAc...) asparagine glycosylation. Residues Asp329 and Ala342 each contribute to the FAD site. Asn400 and Asn464 each carry an N-linked (GlcNAc...) asparagine glycan.

This sequence belongs to the paxM FAD-dependent monooxygenase family. The cofactor is FAD.

The protein localises to the membrane. Its pathway is secondary metabolite biosynthesis; terpenoid biosynthesis. In terms of biological role, salicylate hydroxylase; part of the gene cluster that mediates the biosynthesis of xenovulene A, an unusual meroterpenoid that has potent inhibitory effects on the human gamma-aminobutyrate A (GABAA) benzodiazepine receptor. The first step of xenovulene A biosynthesis is the biosynthesis of 3-methylorcinaldehyde performed by the non-reducing polyketide synthase aspks1. The salicylate hydroxylase asL1 then catalyzes the oxidative dearomatization of 3-methylorcinaldehyde to yield a dearomatized hydroxycyclohexadione. The 2-oxoglutarate-dependent dioxygenase asL3 further catalyzes the oxidative ring expansion to provide the first tropolone metabolite. The cytochrome P450 monooxygenase asR2 allows the synthesis of tropolone hemiacetal. In parallel, a previously unrecognised class of terpene cyclase, asR6, produces alpha-humulene from farnesylpyrophosphate (FPP). The putative Diels-Alderase asR5 probably catalyzes the formation of the tropolone-humulene skeleton by linking humulene and the polyketide moiety. Oxidative-ring contractions catalyzed by asL4 and asL6 then processively remove carbon atoms from the polyketide to yield xenovulene A. In Sarocladium schorii (Acremonium strictum (strain IMI 501407)), this protein is Salicylate hydroxylase asL1.